The following is a 248-amino-acid chain: Probable transcriptional regulatory protein ECH_0704 (248 aa).

A disordered region spans residues Met-1 to Arg-21.

This sequence belongs to the TACO1 family.

Its subcellular location is the cytoplasm. This is Probable transcriptional regulatory protein ECH_0704 from Ehrlichia chaffeensis (strain ATCC CRL-10679 / Arkansas).